Here is a 258-residue protein sequence, read N- to C-terminus: Imidazole glycerol phosphate synthase subunit HisF (258 aa).

Catalysis depends on residues Asp11 and Asp130.

The protein belongs to the HisA/HisF family. Heterodimer of HisH and HisF.

The protein localises to the cytoplasm. It carries out the reaction 5-[(5-phospho-1-deoxy-D-ribulos-1-ylimino)methylamino]-1-(5-phospho-beta-D-ribosyl)imidazole-4-carboxamide + L-glutamine = D-erythro-1-(imidazol-4-yl)glycerol 3-phosphate + 5-amino-1-(5-phospho-beta-D-ribosyl)imidazole-4-carboxamide + L-glutamate + H(+). The protein operates within amino-acid biosynthesis; L-histidine biosynthesis; L-histidine from 5-phospho-alpha-D-ribose 1-diphosphate: step 5/9. Functionally, IGPS catalyzes the conversion of PRFAR and glutamine to IGP, AICAR and glutamate. The HisF subunit catalyzes the cyclization activity that produces IGP and AICAR from PRFAR using the ammonia provided by the HisH subunit. The sequence is that of Imidazole glycerol phosphate synthase subunit HisF from Escherichia coli O1:K1 / APEC.